A 249-amino-acid chain; its full sequence is Cyclin-dependent kinase inhibitor 2 (249 aa).

Residues 118–180 form a disordered region; the sequence is KVCTQAGEDH…MCRRSSTTSA (63 aa). The segment covering 161–180 has biased composition (polar residues); sequence AESNQEAKQQMCRRSSTTSA.

This sequence belongs to the CDI family. ICK/KRP subfamily.

The sequence is that of Cyclin-dependent kinase inhibitor 2 (KRP2) from Oryza sativa subsp. japonica (Rice).